A 419-amino-acid chain; its full sequence is Creatine kinase S-type, mitochondrial (419 aa).

The N-terminal 39 residues, 1 to 39 (MASIFSKLLTGRNASLLFATMGTSVLTTGYLLNRQKVCA), are a transit peptide targeting the mitochondrion. The interval 40–64 (EVREQPRLFPPSADYPDLRKHNNCM) is cardiolipin-binding. The Phosphagen kinase N-terminal domain occupies 46-132 (RLFPPSADYP…FDPVIKLRHN (87 aa)). The Phosphagen kinase C-terminal domain occupies 159–401 (YVLSSRVRTG…NYLVDCEKKL (243 aa)). ATP-binding positions include 162 to 166 (SSRVR) and histidine 225. Phosphotyrosine is present on tyrosine 255. ATP contacts are provided by residues arginine 270, arginine 326, 354 to 359 (RGTGGV), and aspartate 369. Phosphothreonine is present on threonine 356.

Belongs to the ATP:guanido phosphotransferase family. As to quaternary structure, exists as an octamer composed of four CKMT2 homodimers. Sarcomere-specific. Found only in heart and skeletal muscles.

Its subcellular location is the mitochondrion inner membrane. It catalyses the reaction creatine + ATP = N-phosphocreatine + ADP + H(+). In terms of biological role, reversibly catalyzes the transfer of phosphate between ATP and various phosphogens (e.g. creatine phosphate). Creatine kinase isoenzymes play a central role in energy transduction in tissues with large, fluctuating energy demands, such as skeletal muscle, heart, brain and spermatozoa. The sequence is that of Creatine kinase S-type, mitochondrial (CKMT2) from Homo sapiens (Human).